A 212-amino-acid polypeptide reads, in one-letter code: Transcriptional regulator GfcR (212 aa).

The tract at residues 38–60 (LVERSGTGTEPDTSDDGGPHDIH) is disordered.

It belongs to the purine/pyrimidine phosphoribosyltransferase family. GfcR subfamily.

Functionally, DNA-binding transcriptional regulator that functions as a regulator of central sugar catabolic pathways. The polypeptide is Transcriptional regulator GfcR (Haloarcula marismortui (strain ATCC 43049 / DSM 3752 / JCM 8966 / VKM B-1809) (Halobacterium marismortui)).